A 420-amino-acid polypeptide reads, in one-letter code: Pre-mRNA-splicing factor RBM22 (420 aa).

N-acetylalanine is present on Ala-2. Residues Ser-4 and Ser-102 each carry the phosphoserine modification. Residues Lys-139 and Lys-149 each participate in a glycyl lysine isopeptide (Lys-Gly) (interchain with G-Cter in SUMO2) cross-link. The C3H1-type zinc-finger motif lies at Arg-159–Pro-186. Lys-212 bears the N6-acetyllysine mark. One can recognise an RRM domain in the interval Thr-232 to Ser-305. Lys-290 participates in a covalent cross-link: Glycyl lysine isopeptide (Lys-Gly) (interchain with G-Cter in SUMO2). Disordered regions lie at residues Gly-303–Glu-343 and Ala-372–Pro-420. Basic and acidic residues predominate over residues Arg-309 to Thr-318.

Belongs to the SLT11 family. Component of the pre-catalytic and catalytic spliceosome complexes. Component of the postcatalytic spliceosome P complex. Interacts with PDCD6; the interaction induces translocation of PDCD6 in the cytoplasm. Interacts with PPIL1.

The protein resides in the nucleus. It localises to the cytoplasm. In terms of biological role, required for pre-mRNA splicing as component of the activated spliceosome. Involved in the first step of pre-mRNA splicing. Binds directly to the internal stem-loop (ISL) domain of the U6 snRNA and to the pre-mRNA intron near the 5' splice site during the activation and catalytic phases of the spliceosome cycle. Involved in both translocations of the nuclear SLU7 to the cytoplasm and the cytosolic calcium-binding protein PDCD6 to the nucleus upon cellular stress responses. In Bos taurus (Bovine), this protein is Pre-mRNA-splicing factor RBM22 (RBM22).